Here is a 195-residue protein sequence, read N- to C-terminus: Molybdenum cofactor guanylyltransferase (195 aa).

Residues 10 to 12, Lys23, Asn51, Asp69, and Asp99 each bind GTP; that span reads LAG. Mg(2+) is bound at residue Asp99.

It belongs to the MobA family. Monomer. It depends on Mg(2+) as a cofactor.

It is found in the cytoplasm. The enzyme catalyses Mo-molybdopterin + GTP + H(+) = Mo-molybdopterin guanine dinucleotide + diphosphate. Its function is as follows. Transfers a GMP moiety from GTP to Mo-molybdopterin (Mo-MPT) cofactor (Moco or molybdenum cofactor) to form Mo-molybdopterin guanine dinucleotide (Mo-MGD) cofactor. The polypeptide is Molybdenum cofactor guanylyltransferase (Histophilus somni (strain 129Pt) (Haemophilus somnus)).